A 205-amino-acid polypeptide reads, in one-letter code: Molybdenum cofactor guanylyltransferase (205 aa).

GTP-binding positions include 14–16 (LAG), Lys-27, Asp-77, and Asp-107. Asp-107 is a binding site for Mg(2+).

It belongs to the MobA family. In terms of assembly, monomer. The cofactor is Mg(2+).

It is found in the cytoplasm. It carries out the reaction Mo-molybdopterin + GTP + H(+) = Mo-molybdopterin guanine dinucleotide + diphosphate. Its function is as follows. Transfers a GMP moiety from GTP to Mo-molybdopterin (Mo-MPT) cofactor (Moco or molybdenum cofactor) to form Mo-molybdopterin guanine dinucleotide (Mo-MGD) cofactor. The chain is Molybdenum cofactor guanylyltransferase from Burkholderia cenocepacia (strain HI2424).